The primary structure comprises 1091 residues: AP-3 complex subunit beta-1 (1091 aa).

2 disordered regions span residues 1–32 and 267–290; these read MSGNSFAYSEQAGGGEATELGQEATSTVSPSG and EDNEKNFYESDDEQKEKTDQKKKP. Over residues 267 to 288 the composition is skewed to basic and acidic residues; it reads EDNEKNFYESDDEQKEKTDQKK. Residues Ser-276 and Ser-609 each carry the phosphoserine modification. A disordered region spans residues 664-807; sequence AGKAKKENPA…EKEKKTKEDR (144 aa). Basic and acidic residues predominate over residues 667-678; the sequence is AKKENPARKFYS. Acidic residues-rich tracts occupy residues 679-695 and 703-718; these read DSEEEEDSSDSSSDSES and EQDEEGDSSEDSSEDS. The span at 719 to 736 shows a compositional bias: basic and acidic residues; it reads SSEHRSDSESVSEVGDKR. Ser-748 and Ser-750 each carry phosphoserine. Residues 763-775 show a composition bias toward low complexity; the sequence is SDSSSTDSSSVEE. A compositionally biased stretch (acidic residues) spans 776 to 789; it reads SSSDSESESESESE. A compositionally biased stretch (basic and acidic residues) spans 790–807; it reads SESKKVTMEKEKKTKEDR.

It belongs to the adaptor complexes large subunit family. In terms of assembly, adaptor protein complex 3 (AP-3) is a heterotetramer composed of two large adaptins (delta-type subunit AP3D1 and beta-type subunit AP3B1 or AP3B2), a medium adaptin (mu-type subunit AP3M1 or AP3M2) and a small adaptin (sigma-type subunit APS1 or AP3S2). AP-3 associates with the BLOC-1 complex. Interacts with KIF3A; interaction is direct; interaction is impaired by pyrophosphorylation of AP3B1. Post-translationally, phosphorylated on serine residues. In terms of processing, pyrophosphorylation by 5-diphosphoinositol pentakisphosphate (5-IP7) impairs interaction with KIF3A. Serine pyrophosphorylation is achieved by Mg(2+)-dependent, but enzyme independent transfer of a beta-phosphate from a inositol pyrophosphate to a pre-phosphorylated serine residue.

The protein localises to the cytoplasmic vesicle. Its subcellular location is the clathrin-coated vesicle membrane. The protein resides in the golgi apparatus. Functionally, subunit of non-clathrin- and clathrin-associated adaptor protein complex 3 (AP-3) that plays a role in protein sorting in the late-Golgi/trans-Golgi network (TGN) and/or endosomes. The AP complexes mediate both the recruitment of clathrin to membranes and the recognition of sorting signals within the cytosolic tails of transmembrane cargo molecules. AP-3 appears to be involved in the sorting of a subset of transmembrane proteins targeted to lysosomes and lysosome-related organelles. In concert with the BLOC-1 complex, AP-3 is required to target cargos into vesicles assembled at cell bodies for delivery into neurites and nerve terminals. This is AP-3 complex subunit beta-1 (AP3B1) from Canis lupus familiaris (Dog).